The sequence spans 458 residues: Probable multidrug resistance protein NorM (458 aa).

The next 12 membrane-spanning stretches (helical) occupy residues 14 to 34, 56 to 76, 97 to 117, 134 to 154, 164 to 184, 196 to 216, 241 to 261, 283 to 303, 320 to 340, 353 to 373, 389 to 409, and 415 to 435; these read FLVV…MNFF, LWVP…PIIA, LSIA…DPIL, LIGL…RCLI, MFIT…LIFG, AGYA…VVVV, ILLL…IFAA, FASF…IAVG, LGIT…YVLR, VAWL…SDAL, VPFV…GYLL, and LGPY…AIAL.

It belongs to the multi antimicrobial extrusion (MATE) (TC 2.A.66.1) family.

The protein localises to the cell membrane. Its function is as follows. Multidrug efflux pump. The polypeptide is Probable multidrug resistance protein NorM (norM) (Halalkalibacterium halodurans (strain ATCC BAA-125 / DSM 18197 / FERM 7344 / JCM 9153 / C-125) (Bacillus halodurans)).